A 392-amino-acid chain; its full sequence is Pannexin-3 (392 aa).

At 1–39 (MSLAHTAAEYMLSDALLPDRRGPRLKGLRLELPLDRIVK) the chain is on the cytoplasmic side. The chain crosses the membrane as a helical span at residues 40–60 (FVAVGSPLLLMSLAFAQEFSS). Over 61-113 (GSPISCFSPSNFSIRQAAYVDSSCWDSLLHHKQDGPGQDKMKSLWPHKALPYS) the chain is Extracellular. Asn71 is a glycosylation site (N-linked (GlcNAc...) asparagine). The helical transmembrane segment at 114 to 134 (LLALALLMYLPVLLWQYAAVP) threads the bilayer. At 135–215 (ALSSDLLFII…VATYLLRNSL (81 aa)) the chain is on the cytoplasmic side. A helical membrane pass occupies residues 216 to 236 (LLIFTSATYLYLGHFHLDVFF). Over 237–267 (QEEFSCSIKTGLLSDETHVPNLITCRLTSLS) the chain is Extracellular. A helical transmembrane segment spans residues 268–288 (IFQIVSLSSVAIYTILVPVII). Residues 289-392 (YNLTRLCRWD…LTNSACDEHP (104 aa)) are Cytoplasmic-facing.

It belongs to the pannexin family. In terms of assembly, homoheptameric.

Its subcellular location is the cell membrane. The protein resides in the cell junction. It is found in the gap junction. It localises to the endoplasmic reticulum membrane. It catalyses the reaction Ca(2+)(in) = Ca(2+)(out). The catalysed reaction is ATP(in) = ATP(out). In terms of biological role, regulator of osteoblast differentiation by functionning as a Ca(2+) channel in the endoplasmic reticulum which regulates calmodulin (CaM) pathways. Allows ATP release into the extracellular space and activation or purinergic receptors. The chain is Pannexin-3 from Homo sapiens (Human).